The sequence spans 30 residues: ECWSQAADCSDGHCCAGRSFSKNCRPYGGD.

2 disulfide bridges follow: Cys2/Cys15 and Cys9/Cys24.

This sequence belongs to the AVIT (prokineticin) family. In terms of tissue distribution, expressed by the venom gland.

It is found in the secreted. This chain is Hainantoxin F6-34.84, found in Cyriopagopus hainanus (Chinese bird spider).